We begin with the raw amino-acid sequence, 388 residues long: MGIKNLTSLIEENAPSAIKSNDLKSYSGRIVAIDASTSMYQFLIAINTEMGAALMNANGETTSHLQGMFYRTIKLMTRGIKPIYVFDGKAPVLKSGELAKRYARRKEAEQQLEEANEVGNSEDVQKFQKRTISASRKQNEECKKLLELMGVPIVQAPCEAEAQCAELCKGGKAWATGSEDMDSLTLGTTILLRRLTFSEARKLPIMEIELEKVLDGLDLTHDQFVDLCILLGCDYCDTIKGIGPKKSFDMITKHKNIQTVIQNIDRTKNPIPESFPYEEVRELFKNPDVIKCQDLPEIVWKEPDVDGLIKYLVGEMGFNETRVQQGIEKLKKYKDTGVQTRIDTFFPMIKRPRDEDAGSAKKKQKTVAKPGAAGSKKKPAAKKAAGKK.

The interval 1–105 (MGIKNLTSLI…GELAKRYARR (105 aa)) is N-domain. Asp-34 serves as a coordination point for Mg(2+). Arg-71 is a binding site for DNA. Mg(2+)-binding residues include Asp-87, Glu-159, Glu-161, Asp-180, and Asp-182. Residues 123–254 (DVQKFQKRTI…KKSFDMITKH (132 aa)) are I-domain. Glu-159 serves as a coordination point for DNA. Positions 232 and 234 each coordinate DNA. Residue Asp-234 coordinates Mg(2+). Residues 338–346 (VQTRIDTFF) form an interaction with PCNA region. The tract at residues 349-388 (IKRPRDEDAGSAKKKQKTVAKPGAAGSKKKPAAKKAAGKK) is disordered. The segment covering 375 to 388 (SKKKPAAKKAAGKK) has biased composition (basic residues).

Belongs to the XPG/RAD2 endonuclease family. FEN1 subfamily. Interacts with PCNA. Three molecules of repG bind to one PCNA trimer with each molecule binding to one PCNA monomer. PCNA stimulates the nuclease activity without altering cleavage specificity. The cofactor is Mg(2+). In terms of processing, phosphorylated. Phosphorylation upon DNA damage induces relocalization to the nuclear plasma.

The protein resides in the nucleus. It is found in the nucleolus. Its subcellular location is the nucleoplasm. The protein localises to the mitochondrion. Its function is as follows. Structure-specific nuclease with 5'-flap endonuclease and 5'-3' exonuclease activities involved in DNA replication and repair. During DNA replication, cleaves the 5'-overhanging flap structure that is generated by displacement synthesis when DNA polymerase encounters the 5'-end of a downstream Okazaki fragment. It enters the flap from the 5'-end and then tracks to cleave the flap base, leaving a nick for ligation. Also involved in the long patch base excision repair (LP-BER) pathway, by cleaving within the apurinic/apyrimidinic (AP) site-terminated flap. Acts as a genome stabilization factor that prevents flaps from equilibrating into structures that lead to duplications and deletions. Also possesses 5'-3' exonuclease activity on nicked or gapped double-stranded DNA, and exhibits RNase H activity. Also involved in replication and repair of rDNA and in repairing mitochondrial DNA. This chain is Flap endonuclease 1, found in Heterostelium pallidum (strain ATCC 26659 / Pp 5 / PN500) (Cellular slime mold).